A 365-amino-acid chain; its full sequence is Decapping nuclease RAI1 (365 aa).

Residue Glu165 participates in a divalent metal cation binding. Positions 197 and 214 each coordinate substrate. Asp216, Glu234, and Leu235 together coordinate a divalent metal cation. Substrate-binding residues include Lys236 and Gln260.

It belongs to the DXO/Dom3Z family. In terms of assembly, interacts with rat1; the interaction is direct, stabilizes rat1 protein structure and stimulates its exoribonuclease activity. The interaction also stimulates rai1 pyrophosphohydrolase activity, probably by recruiting it to mRNA substrates. Requires a divalent metal cation as cofactor.

It is found in the nucleus. The catalysed reaction is a 5'-end NAD(+)-phospho-ribonucleoside in mRNA + H2O = a 5'-end phospho-ribonucleoside in mRNA + NAD(+) + H(+). The enzyme catalyses a 5'-end (N(7)-methyl 5'-triphosphoguanosine)-ribonucleoside-ribonucleotide in mRNA + H2O = a (N(7)-methyl 5'-triphosphoguanosine)-nucleoside + a 5'-end phospho-ribonucleoside in mRNA + H(+). It catalyses the reaction a 5'-end triphospho-ribonucleoside in mRNA + H2O = a 5'-end phospho-ribonucleoside in mRNA + diphosphate + H(+). Functionally, decapping enzyme for NAD-capped RNAs: specifically hydrolyzes the nicotinamide adenine dinucleotide (NAD) cap from a subset of RNAs by removing the entire NAD moiety from the 5'-end of an NAD-capped RNA. The NAD-cap is present at the 5'-end of some RNAs and snoRNAs. In contrast to the canonical 5'-end N7 methylguanosine (m7G) cap, the NAD cap promotes mRNA decay. Also acts as a non-canonical decapping enzyme that removes the entire cap structure of m7G capped or incompletely capped RNAs. Has decapping activity toward incomplete 5'-end m7G cap mRNAs such as unmethylated 5'-end-capped RNA (cap0), while it has no activity toward 2'-O-ribose methylated m7G cap (cap1). Also possesses RNA 5'-pyrophosphohydrolase activity by hydrolyzing the 5'-end triphosphate to release pyrophosphates. Stimulates exoribonuclease activity of Rat1, allowing it to degrade RNAs with stable secondary structure more effectively. This Aspergillus fumigatus (strain ATCC MYA-4609 / CBS 101355 / FGSC A1100 / Af293) (Neosartorya fumigata) protein is Decapping nuclease RAI1 (rai1).